Consider the following 222-residue polypeptide: Ras-related protein Rab-41 (222 aa).

Residues serine 41, valine 42, glycine 43, lysine 44, threonine 45, serine 46, and threonine 63 each coordinate GTP. Threonine 45 is a Mg(2+) binding site. The interval 58–66 (CACQATVGI) is switch-I. Mg(2+) contacts are provided by threonine 63 and aspartate 86. Residues glycine 89, asparagine 144, lysine 145, aspartate 147, serine 174, alanine 175, and lysine 176 each contribute to the GTP site. Residues 89–105 (GQERFHSLIPSYIRDST) form a switch-II region. Cysteine 222 carries S-geranylgeranyl cysteine lipidation.

The protein belongs to the small GTPase superfamily. Rab family. Requires Mg(2+) as cofactor. As to expression, widely expressed in brain, testis, lung, heart, ovary, colon, kidney, uterus and spleen but not in liver.

Its subcellular location is the cytoplasm. It carries out the reaction GTP + H2O = GDP + phosphate + H(+). With respect to regulation, regulated by guanine nucleotide exchange factors (GEFs) which promote the exchange of bound GDP for free GTP. Regulated by GTPase activating proteins (GAPs) which increase the GTP hydrolysis activity. Inhibited by GDP dissociation inhibitors (GDIs). In terms of biological role, the small GTPases Rab are key regulators of intracellular membrane trafficking, from the formation of transport vesicles to their fusion with membranes. Rabs cycle between an inactive GDP-bound form and an active GTP-bound form that is able to recruit to membranes different sets of downstream effectors directly responsible for vesicle formation, movement, tethering and fusion. RAB41 is required for normal Golgi ribbon organization and ER-to-Golgi trafficking. This Homo sapiens (Human) protein is Ras-related protein Rab-41.